The sequence spans 333 residues: MPIRHIIVHQIDKKPDGTPAVLHARDTELGASQAIENMLADLNESYNAKQGKAWGLFHGESGAYPFSRWLKDYLDENQDFTAFSRHAVEHLQKLMEESNLSTGGHVLFAHYQQGMTDYLTVALLHHSEGVAVNDTLDVTPAKHLDLGQLHLAARINISEWQNNKQSKQYISFIKGKNGRKVSDYFRDFIGCQEGVDAPGETRTLLKAFSDFVESEDLPEEQAREKTNTLVGYATSQAKLGEPMTLEELSGLIDEDRPKAFYDHIRNRDYGLSPEIPADKRTLNQFRRFTGRAEGLSISFEAHLLGSKIDYDENAGTLTIRNLPTQLRDQLKRG.

This sequence belongs to the YejK family.

The protein localises to the cytoplasm. The protein resides in the nucleoid. In Metapseudomonas resinovorans (Pseudomonas resinovorans), this protein is Nucleoid-associated protein.